We begin with the raw amino-acid sequence, 587 residues long: MAARDDAGARKAQHDAEIHDLRSQVSMLEEEVSVLRRKLAESPRQIRVLEDRLHETQAKLAAVTGQNERLVATLKEAREQIIALKEEVDRLAQPPSGFGVFLGAREDGTVDIFTGGRKLRVNVSPSVDVSQLKQGQEVLLNEALNVVEALGYETQGEVVMLKELFDDGERALVIAHADEERVIKLAEPLRGVPLRAGDSLMLEPRSGYAYEKIHKAEVEELVLEEVPDITYEEIGGLGPQIEQIRDAVELPYLHADLFREHKLRPPKGVLLYGPPGCGKTLIAKAVANSLAKQVAEKTGQEGKSFFLNIKGPELLNKYVGETERHIRLVFQRAREKASAGTPVIVFFDEMDSIFRTRGSGVSSDVENTIVPQLLSEIDGVEGLENVIVIGASNREDMIDPAILRPGRLDVKIKIERPDAEAAKDIFSKYLVPGLPLHPDDLAEHGGSEEATIEAMIQRVVERMYAETEENRFLEVTYANGDKEVLYFKDFNSGAMIQNIVDRAKKMAIKQYLETGQKGLRVSHLLAACVDEFSENEDLPNTTNPDDWARISGKKGERIVYIRTLVSGKAGSEAGRSIDTVANTGQYL.

Positions 9-94 form a coiled coil; that stretch reads ARKAQHDAEI…KEEVDRLAQP (86 aa). 276-281 lines the ATP pocket; it reads GCGKTL. The docks into pockets in the proteasome alpha-ring stretch occupies residues 586-587; it reads YL.

The protein belongs to the AAA ATPase family. As to quaternary structure, homohexamer. Assembles into a hexameric ring structure that caps the 20S proteasome core. Strongly interacts with the prokaryotic ubiquitin-like protein Pup through a hydrophobic interface; the interacting region of ARC lies in its N-terminal coiled-coil domain. There is one Pup binding site per ARC hexamer ring. Upon ATP-binding, the C-terminus of ARC interacts with the alpha-rings of the proteasome core, possibly by binding to the intersubunit pockets.

The protein operates within protein degradation; proteasomal Pup-dependent pathway. Its function is as follows. ATPase which is responsible for recognizing, binding, unfolding and translocation of pupylated proteins into the bacterial 20S proteasome core particle. May be essential for opening the gate of the 20S proteasome via an interaction with its C-terminus, thereby allowing substrate entry and access to the site of proteolysis. Thus, the C-termini of the proteasomal ATPase may function like a 'key in a lock' to induce gate opening and therefore regulate proteolysis. The protein is Proteasome-associated ATPase of Thermomonospora curvata (strain ATCC 19995 / DSM 43183 / JCM 3096 / KCTC 9072 / NBRC 15933 / NCIMB 10081 / Henssen B9).